A 243-amino-acid polypeptide reads, in one-letter code: Methylthioribulose-1-phosphate dehydratase (243 aa).

Cys90 is a binding site for substrate. Zn(2+) contacts are provided by His108 and His110. Glu131 functions as the Proton donor/acceptor in the catalytic mechanism. Residue His193 coordinates Zn(2+).

The protein belongs to the aldolase class II family. MtnB subfamily. Requires Zn(2+) as cofactor.

It is found in the cytoplasm. It catalyses the reaction 5-(methylsulfanyl)-D-ribulose 1-phosphate = 5-methylsulfanyl-2,3-dioxopentyl phosphate + H2O. It functions in the pathway amino-acid biosynthesis; L-methionine biosynthesis via salvage pathway; L-methionine from S-methyl-5-thio-alpha-D-ribose 1-phosphate: step 2/6. Its function is as follows. Catalyzes the dehydration of methylthioribulose-1-phosphate (MTRu-1-P) into 2,3-diketo-5-methylthiopentyl-1-phosphate (DK-MTP-1-P). The polypeptide is Methylthioribulose-1-phosphate dehydratase (Zygosaccharomyces rouxii (strain ATCC 2623 / CBS 732 / NBRC 1130 / NCYC 568 / NRRL Y-229)).